The following is a 172-amino-acid chain: Adenine phosphoribosyltransferase (172 aa).

The protein belongs to the purine/pyrimidine phosphoribosyltransferase family. Homodimer.

It localises to the cytoplasm. It catalyses the reaction AMP + diphosphate = 5-phospho-alpha-D-ribose 1-diphosphate + adenine. It functions in the pathway purine metabolism; AMP biosynthesis via salvage pathway; AMP from adenine: step 1/1. In terms of biological role, catalyzes a salvage reaction resulting in the formation of AMP, that is energically less costly than de novo synthesis. This chain is Adenine phosphoribosyltransferase, found in Alkaliphilus oremlandii (strain OhILAs) (Clostridium oremlandii (strain OhILAs)).